Here is a 361-residue protein sequence, read N- to C-terminus: Chorismate synthase (361 aa).

Over residues 38 to 49 (EKDMQHDLDRRR) the composition is skewed to basic and acidic residues. Residues 38-58 (EKDMQHDLDRRRPGTSKYTTQ) are disordered. Residue Arg-48 coordinates NADP(+). Residues 125 to 127 (RSS), 238 to 239 (NA), Gly-278, 293 to 297 (KPTSS), and Arg-319 each bind FMN.

This sequence belongs to the chorismate synthase family. Homotetramer. FMNH2 serves as cofactor.

It catalyses the reaction 5-O-(1-carboxyvinyl)-3-phosphoshikimate = chorismate + phosphate. It functions in the pathway metabolic intermediate biosynthesis; chorismate biosynthesis; chorismate from D-erythrose 4-phosphate and phosphoenolpyruvate: step 7/7. Its function is as follows. Catalyzes the anti-1,4-elimination of the C-3 phosphate and the C-6 proR hydrogen from 5-enolpyruvylshikimate-3-phosphate (EPSP) to yield chorismate, which is the branch point compound that serves as the starting substrate for the three terminal pathways of aromatic amino acid biosynthesis. This reaction introduces a second double bond into the aromatic ring system. The protein is Chorismate synthase of Photobacterium profundum (strain SS9).